Here is a 201-residue protein sequence, read N- to C-terminus: 3-isopropylmalate dehydratase small subunit (201 aa).

This sequence belongs to the LeuD family. LeuD type 1 subfamily. In terms of assembly, heterodimer of LeuC and LeuD.

It carries out the reaction (2R,3S)-3-isopropylmalate = (2S)-2-isopropylmalate. The protein operates within amino-acid biosynthesis; L-leucine biosynthesis; L-leucine from 3-methyl-2-oxobutanoate: step 2/4. In terms of biological role, catalyzes the isomerization between 2-isopropylmalate and 3-isopropylmalate, via the formation of 2-isopropylmaleate. In Kineococcus radiotolerans (strain ATCC BAA-149 / DSM 14245 / SRS30216), this protein is 3-isopropylmalate dehydratase small subunit.